Here is a 106-residue protein sequence, read N- to C-terminus: UPF0145 protein Tlet_1264 (106 aa).

It belongs to the UPF0145 family.

This Pseudothermotoga lettingae (strain ATCC BAA-301 / DSM 14385 / NBRC 107922 / TMO) (Thermotoga lettingae) protein is UPF0145 protein Tlet_1264.